Reading from the N-terminus, the 122-residue chain is Probable non-specific lipid-transfer protein 3 (122 aa).

The signal sequence occupies residues 1–29; that stretch reads MARLNSKAVAAAVVLAAVVLMMAGREASA. Disulfide bonds link Cys-33/Cys-81, Cys-43/Cys-58, Cys-59/Cys-104, and Cys-79/Cys-118.

This sequence belongs to the plant LTP family. In terms of tissue distribution, expressed in phloem. Also detected in the epidermis near the vascular tissues in resistant plants infected by Hessian fly larvae.

Functionally, plant non-specific lipid-transfer proteins transfer phospholipids as well as galactolipids across membranes. May play a role in wax or cutin deposition in the cell walls of expanding epidermal cells and certain secretory tissues. The chain is Probable non-specific lipid-transfer protein 3 (LTP3) from Triticum aestivum (Wheat).